Consider the following 551-residue polypeptide: Serendipity locus protein alpha (551 aa).

It is found in the cytoplasm. The protein localises to the cell membrane. In terms of biological role, required for the cellularization of the syncytial blastoderm embryo. Involved in the localization of the actin filaments just prior to and during plasma membrane invagination. Sry-alpha together with nullo and bnk may provide auxiliary functions, by acting both to stabilize a large and dynamic microfilament structure and regulate its functions. The sequence is that of Serendipity locus protein alpha (Sry-alpha) from Drosophila pseudoobscura pseudoobscura (Fruit fly).